Consider the following 518-residue polypeptide: G-protein coupled receptor 161 (518 aa).

At 1-26 (MNSSSDGANEGAGAAADNGPTKVAES) the chain is on the extracellular side. Residue asparagine 2 is glycosylated (N-linked (GlcNAc...) asparagine). Residues 27–47 (IAIIIIDILICLGNLVIVVTL) traverse the membrane as a helical segment. Residues 48–59 (YKKSYLLSLSNK) are Cytoplasmic-facing. The helical transmembrane segment at 60–80 (FVFSLTFSNLLLSMLVLPFVV) threads the bilayer. The Extracellular segment spans residues 81-97 (VSSILREWIFGVVWCNF). A disulfide bridge links cysteine 95 with cysteine 173. Residue asparagine 96 is glycosylated (N-linked (GlcNAc...) asparagine). The helical transmembrane segment at 98–118 (SALLYMLISSASMLTLGIIAI) threads the bilayer. The Cytoplasmic portion of the chain corresponds to 119–138 (DRYYAVLYPMVYPMKITGNR). The chain crosses the membrane as a helical span at residues 139-159 (AVLALVYVWLHSLIGCLPPLF). Residues 160 to 185 (GWSTLEFDHFKWMCVAAWHKEAGYTA) are Extracellular-facing. The helical transmembrane segment at 186–206 (FWQVWCALLPFIVMMICYGFI) threads the bilayer. Residues 207-264 (FRVARIKARKIHCGTVIIVQEASQKNGRKNSSTSTSSSGSRKNGFSSIVYSANQCKAL) are Cytoplasmic-facing. The chain crosses the membrane as a helical span at residues 265–285 (ITILVVIGAFVLTWGPYMIVI). At 286 to 301 (STEALKGKNSVSPVLE) the chain is on the extracellular side. Residues 302–322 (TLATWLSFTSAICHPLIYGLW) traverse the membrane as a helical segment. At 323–518 (NKTVRKELLG…GNIETSKCDV (196 aa)) the chain is on the cytoplasmic side. Residues 429–448 (EVEQKNDARTMPTQPTAPSE) are disordered. The span at 439-448 (MPTQPTAPSE) shows a compositional bias: polar residues.

Belongs to the G-protein coupled receptor 1 family.

It is found in the cell projection. It localises to the cilium membrane. Its subcellular location is the cell membrane. Key negative regulator of Shh signaling during neural tube development. Recruited to primary cilia and acts as a regulator of the PKA-dependent basal repression machinery in Shh signaling by increasing cAMP levels, leading to promote the PKA-dependent processing of gli3 into gli3r and repress the Shh signaling. In presence of shh, it is removed from primary cilia, preventing its activity and allowing activation of the Shh signaling. This chain is G-protein coupled receptor 161 (gpr161), found in Xenopus tropicalis (Western clawed frog).